A 222-amino-acid polypeptide reads, in one-letter code: UPF0758 protein YicR (222 aa).

Positions 100–222 constitute an MPN domain; that stretch reads PLLSPEMTRE…YVSFAERGWI (123 aa). Residues His171, His173, and Asp184 each coordinate Zn(2+). Positions 171 to 184 match the JAMM motif motif; sequence HNHPSGCAEPSKAD.

This sequence belongs to the UPF0758 family. YicR subfamily.

This chain is UPF0758 protein YicR, found in Escherichia coli (strain K12 / MC4100 / BW2952).